The primary structure comprises 616 residues: Centrosomal protein of 70 kDa (616 aa).

2 coiled-coil regions span residues 96-210 (EETT…EEER) and 273-335 (NYKG…NIKL). The TPR repeat unit spans residues 502–535 (NGVFPRMNEVYTRLGEMNNAVRNLQELLELDSSS).

As to quaternary structure, directly interacts with tubulin-gamma; this interaction determines centrosomal localization.

It is found in the cytoplasm. Its subcellular location is the cytoskeleton. The protein localises to the microtubule organizing center. The protein resides in the centrosome. Functionally, plays a role in the organization of both preexisting and nascent microtubules in interphase cells. During mitosis, required for the organization and orientation of the mitotic spindle. This is Centrosomal protein of 70 kDa (Cep70) from Mus musculus (Mouse).